Consider the following 299-residue polypeptide: MDKIHAMQLFIKVAELESFSRAADFFALPKGSVSRQIQALEHQLGTQLLQRTTRRVKLTPEGMTYYQRAKDVLSNLSELDGLFQQDATSISGKLRIDIPPGIAKSLLLPRLSEFLYLHPGIELELSSHDRPVDILHDGFDCVIRTGALPEDGVIARPLGKLTMVNCASPHYLTRFGYPQSPDDLTSHAIVRYTPHLGVHPLGFEVASVNGVQWFKSGGMLTVNSSENYLTAGLAGLGIIQIPRIAVREALRAGRLIEVLPGYRAEPLSLSLVYPQRRELSRRVNLFMQWLAGVMKEYLD.

An HTH lysR-type domain is found at 1–59; it reads MDKIHAMQLFIKVAELESFSRAADFFALPKGSVSRQIQALEHQLGTQLLQRTTRRVKLT. Positions 19–38 form a DNA-binding region, H-T-H motif; sequence FSRAADFFALPKGSVSRQIQ.

It belongs to the LysR transcriptional regulatory family.

This is an uncharacterized protein from Escherichia coli (strain K12).